Consider the following 622-residue polypeptide: Chaperone protein HscA homolog (622 aa).

This sequence belongs to the heat shock protein 70 family.

Chaperone involved in the maturation of iron-sulfur cluster-containing proteins. Has a low intrinsic ATPase activity which is markedly stimulated by HscB. This Burkholderia multivorans (strain ATCC 17616 / 249) protein is Chaperone protein HscA homolog.